The primary structure comprises 1214 residues: Reverse gyrase (1214 aa).

The RG N-terminal-type zinc-finger motif lies at 1–37 (MKAIYRDMCPNCRGAITDERLAAKNPCDACLDEPISM). Zn(2+) is bound by residues cysteine 9, cysteine 12, cysteine 27, and cysteine 30. ATP contacts are provided by residues glutamine 89 and 106–113 (APTGMGKS). Residues 93 to 252 (VKRIIKGKSF…WEIIKLKKQL (160 aa)) enclose the Helicase ATP-binding domain. The DEAD box motif lies at 213-216 (DDVD). The tract at residues 635–1214 (DLVKSALMIV…YEEILRYVKS (580 aa)) is topoisomerase I. A Toprim domain is found at 639–802 (SALMIVESPN…VIKRIEFHEV (164 aa)). Mg(2+) is bound at residue glutamate 645. The RG C-terminal-type zinc-finger motif lies at 719–748 (IKRCRDCGHQFVDWEEKGVCPRCGSRNVYD). Positions 722, 725, 738, and 741 each coordinate Zn(2+). Aspartate 771 serves as a coordination point for Mg(2+). The Topo IA-type catalytic domain occupies 818-1212 (NEDRVNAQLV…ELYEEILRYV (395 aa)). The active-site O-(5'-phospho-DNA)-tyrosine intermediate is tyrosine 955.

This sequence in the N-terminal section; belongs to the DEAD box helicase family. DDVD subfamily. It in the C-terminal section; belongs to the type IA topoisomerase family. As to quaternary structure, monomer. The cofactor is Zn(2+). Mg(2+) serves as cofactor.

The protein resides in the cytoplasm. The enzyme catalyses ATP + H2O = ADP + phosphate + H(+). Its function is as follows. Modifies the topological state of DNA by introducing positive supercoils in an ATP-dependent process. Increases the linking number in steps of +1. Binds to single-stranded DNA, transiently cleaves and then rejoins the ends, introducing a positive supercoil in the process. The scissile phosphodiester is attacked by the catalytic tyrosine of the enzyme, resulting in the formation of a DNA-(5'-phosphotyrosyl)-enzyme intermediate. Probably involved in rewinding DNA strands in regions of the chromosome that have opened up to allow replication, transcription, DNA repair and/or for DNA protection. The polypeptide is Reverse gyrase (Pyrococcus furiosus (strain ATCC 43587 / DSM 3638 / JCM 8422 / Vc1)).